The chain runs to 180 residues: NAD(P)H-quinone oxidoreductase subunit J (180 aa).

Residues 1 to 16 show a composition bias toward polar residues; it reads MNEETQTSELTNTDQG. The tract at residues 1–23 is disordered; sequence MNEETQTSELTNTDQGPQIEPGP.

The protein belongs to the complex I 30 kDa subunit family. As to quaternary structure, NDH-1 can be composed of about 15 different subunits; different subcomplexes with different compositions have been identified which probably have different functions.

The protein resides in the cellular thylakoid membrane. The enzyme catalyses a plastoquinone + NADH + (n+1) H(+)(in) = a plastoquinol + NAD(+) + n H(+)(out). The catalysed reaction is a plastoquinone + NADPH + (n+1) H(+)(in) = a plastoquinol + NADP(+) + n H(+)(out). Functionally, NDH-1 shuttles electrons from an unknown electron donor, via FMN and iron-sulfur (Fe-S) centers, to quinones in the respiratory and/or the photosynthetic chain. The immediate electron acceptor for the enzyme in this species is believed to be plastoquinone. Couples the redox reaction to proton translocation, and thus conserves the redox energy in a proton gradient. Cyanobacterial NDH-1 also plays a role in inorganic carbon-concentration. The protein is NAD(P)H-quinone oxidoreductase subunit J of Prochlorococcus marinus (strain MIT 9211).